Reading from the N-terminus, the 303-residue chain is Thioesterase poxG (303 aa).

This sequence belongs to the lcsJ thioesterase family.

It functions in the pathway secondary metabolite biosynthesis. Thioesterase; part of the gene cluster that mediates the biosynthesis of oxaleimides, cytotoxic compounds containing an unusual disubstituted succinimide moiety. The first step of the pathway is provided by the HR-PKS poxF that serves in a new mode of collaborative biosynthesis with the PKS-NRPS poxE, by providing the olefin containing amino acid substrate via the synthesis of an ACP-bound dec-4-enoate. The cytochrome P450 monooxygenase poxM-catalyzed oxidation at the alpha-position creates the enzyme-bound 2-hydroxydec-4-enoyl-ACP thioester, which may be prone to spontaneous hydrolysis to yield 2-hydroxydec-4-enoic acid due to increased electrophilicity of the carbonyl. 2-hydroxydec-4-enoic acid can then be further oxidized by poxM to yield the alpha-ketoacid 2-oxodec-4-enoicacid, which is reductively aminated by the aminotransferase poxL to yield (S,E)-2-aminodec-4-enoic acid. The Hybrid PKS-NRPS synthetase poxE then performs condensation between the octaketide product of its PKS modules and the amino group of (S,E)-2-aminodec-4-enoic acid which is activated and incorporated by the adenylation domain. The resulting aminoacyl product can be cyclized by the Diels-Alderase PoxQ and reductively released by the reductive (R) domain of poxE to yield an aldehyde intermediate. The released aldehyde is then substrate for a Knoevenagel condensation by the hydrolyase poxO followed by an oxidation at the 5-position of the pyrrolidone ring. The presence of the olefin from the amino acid building block allows for migration of the substituted allyl group to occur. This allylic transposition reaction takes place in a conjugate addition, semipinacol-like fashion to yield a succinimide intermediate. Iterative two-electron oxidations of the C7 methyl of the succinimide intermediate to the carboxylic acid can be catalyzed by one of two remaining cytochrome P450 monooxygenasess poxC or poxD to yield oxaleimide A. Subsequent oxidation yields the maleimide scaffold oxaleimide I. Both oxaleimide A and oxaleimide I can undergo oxidative modifications in the decalin ring to yield the series of products oxaleimides B to H. This chain is Thioesterase poxG, found in Penicillium oxalicum.